A 181-amino-acid polypeptide reads, in one-letter code: Neuroblastoma suppressor of tumorigenicity 1 (181 aa).

The N-terminal stretch at 1-16 is a signal peptide; sequence MMLRVLVGAVLPAMLL. Intrachain disulfides connect C35-C85, C49-C99, C59-C118, C63-C120, and C82-C123. Positions 35–124 constitute a CTCK domain; the sequence is CEAKNITQIV…ILHCSCQACG (90 aa). A disordered region spans residues 132 to 181; the sequence is LSVYVQGEDGPGSQPGTHPHPHPHPHPGGQTPEPEDPPGAPHTEEEGAED.

It belongs to the DAN family. Homodimer. Most abundant in normal lung and meningioma.

The protein resides in the secreted. Its function is as follows. Possible candidate as a tumor suppressor gene of neuroblastoma. May play an important role in preventing cells from entering the final stage (G1/S) of the transformation process. The polypeptide is Neuroblastoma suppressor of tumorigenicity 1 (NBL1) (Homo sapiens (Human)).